A 437-amino-acid polypeptide reads, in one-letter code: MDSRVLESALRALSRYPLCDRCLGRLFARLGRGWSNRERGEAVKRVLVMELHRRVLEGDEAALKTLVSAAPNIGEVARDVVEHLSPGSYREGGPCAVCGGRLESVIASAVEEGYRLLRAYDIERFVVGVRLERGVAMAEEEVKLAAGAGYGESIKAEIRREVGKLLVSRGGVTVDFDSPEATLMVEFPGGGVDIQVNSLLYKARYWKLARNISQAYWPTPEGPRYFSVEQALWPVLKLTGGERLVVHAAGREDVDARMLGSGRPMIVEVKSPRRRRIPLEELEAAANAGGKGLVRFRFETAAKRAEVALYKEETARVRKVYRALVAVEGGVSEVDVEGLRRALEGAVIMQRTPSRVLHRRPDILRRRRLYSLDCSPLEGAPLMECILEAEGGLYIKELVSGDGGRTRPSFAEVLGREAVCIELDVVWVEHEAPAAPG.

The THUMP domain occupies 76-198 (VARDVVEHLS…GGGVDIQVNS (123 aa)). Aspartate 253 acts as the Nucleophile in catalysis. Residues tyrosine 321 and tyrosine 394 each contribute to the substrate site.

This sequence belongs to the pseudouridine synthase Pus10 family.

It catalyses the reaction uridine(54) in tRNA = pseudouridine(54) in tRNA. The enzyme catalyses uridine(55) in tRNA = pseudouridine(55) in tRNA. In terms of biological role, responsible for synthesis of pseudouridine from uracil-54 and uracil-55 in the psi GC loop of transfer RNAs. The polypeptide is tRNA pseudouridine synthase Pus10 (Aeropyrum pernix (strain ATCC 700893 / DSM 11879 / JCM 9820 / NBRC 100138 / K1)).